Here is a 101-residue protein sequence, read N- to C-terminus: Large ribosomal subunit protein bL28 (101 aa).

This sequence belongs to the bacterial ribosomal protein bL28 family.

The polypeptide is Large ribosomal subunit protein bL28 (Rhodopseudomonas palustris (strain BisB5)).